The primary structure comprises 319 residues: Acetyl esterase (319 aa).

The Involved in the stabilization of the negatively charged intermediate by the formation of the oxyanion hole motif lies at 91-93; it reads HGG. Active-site residues include Ser-165, Asp-262, and His-292.

It belongs to the 'GDXG' lipolytic enzyme family. As to quaternary structure, homodimer. Interacts with MalT and MelA.

The protein resides in the cytoplasm. In terms of biological role, displays esterase activity towards short chain fatty esters (acyl chain length of up to 8 carbons). Able to hydrolyze triacetylglycerol (triacetin) and tributyrylglycerol (tributyrin), but not trioleylglycerol (triolein) or cholesterol oleate. Negatively regulates MalT activity by antagonizing maltotriose binding. Inhibits MelA galactosidase activity. The sequence is that of Acetyl esterase from Escherichia coli O45:K1 (strain S88 / ExPEC).